A 456-amino-acid chain; its full sequence is Bifunctional protein GlmU (456 aa).

The tract at residues 1–229 is pyrophosphorylase; it reads MYNCAIILAA…FEETMGVNSR (229 aa). Residues 8-11, lysine 22, glutamine 73, and 78-79 each bind UDP-N-acetyl-alpha-D-glucosamine; these read LAAG and GT. Aspartate 103 is a Mg(2+) binding site. 4 residues coordinate UDP-N-acetyl-alpha-D-glucosamine: glycine 140, glutamate 155, asparagine 170, and asparagine 227. Asparagine 227 is a binding site for Mg(2+). The tract at residues 230 to 250 is linker; the sequence is VQLAEAEKIMRNRINKIHMEN. Positions 251–456 are N-acetyltransferase; the sequence is GVTLIDHNNT…SWVYKKGLKK (206 aa). Positions 332 and 350 each coordinate UDP-N-acetyl-alpha-D-glucosamine. Histidine 362 serves as the catalytic Proton acceptor. UDP-N-acetyl-alpha-D-glucosamine contacts are provided by tyrosine 365 and asparagine 376. Acetyl-CoA is bound by residues 385–386, alanine 422, and arginine 439; that span reads NY.

In the N-terminal section; belongs to the N-acetylglucosamine-1-phosphate uridyltransferase family. It in the C-terminal section; belongs to the transferase hexapeptide repeat family. Homotrimer. Requires Mg(2+) as cofactor.

The protein resides in the cytoplasm. It carries out the reaction alpha-D-glucosamine 1-phosphate + acetyl-CoA = N-acetyl-alpha-D-glucosamine 1-phosphate + CoA + H(+). It catalyses the reaction N-acetyl-alpha-D-glucosamine 1-phosphate + UTP + H(+) = UDP-N-acetyl-alpha-D-glucosamine + diphosphate. It functions in the pathway nucleotide-sugar biosynthesis; UDP-N-acetyl-alpha-D-glucosamine biosynthesis; N-acetyl-alpha-D-glucosamine 1-phosphate from alpha-D-glucosamine 6-phosphate (route II): step 2/2. The protein operates within nucleotide-sugar biosynthesis; UDP-N-acetyl-alpha-D-glucosamine biosynthesis; UDP-N-acetyl-alpha-D-glucosamine from N-acetyl-alpha-D-glucosamine 1-phosphate: step 1/1. It participates in bacterial outer membrane biogenesis; LPS lipid A biosynthesis. Catalyzes the last two sequential reactions in the de novo biosynthetic pathway for UDP-N-acetylglucosamine (UDP-GlcNAc). The C-terminal domain catalyzes the transfer of acetyl group from acetyl coenzyme A to glucosamine-1-phosphate (GlcN-1-P) to produce N-acetylglucosamine-1-phosphate (GlcNAc-1-P), which is converted into UDP-GlcNAc by the transfer of uridine 5-monophosphate (from uridine 5-triphosphate), a reaction catalyzed by the N-terminal domain. The sequence is that of Bifunctional protein GlmU from Clostridium kluyveri (strain NBRC 12016).